The chain runs to 880 residues: Alanine--tRNA ligase (880 aa).

Zn(2+) contacts are provided by His566, His570, Cys668, and His672.

It belongs to the class-II aminoacyl-tRNA synthetase family. It depends on Zn(2+) as a cofactor.

The protein resides in the cytoplasm. It catalyses the reaction tRNA(Ala) + L-alanine + ATP = L-alanyl-tRNA(Ala) + AMP + diphosphate. Its function is as follows. Catalyzes the attachment of alanine to tRNA(Ala) in a two-step reaction: alanine is first activated by ATP to form Ala-AMP and then transferred to the acceptor end of tRNA(Ala). Also edits incorrectly charged Ser-tRNA(Ala) and Gly-tRNA(Ala) via its editing domain. This chain is Alanine--tRNA ligase, found in Nostoc sp. (strain PCC 7120 / SAG 25.82 / UTEX 2576).